Consider the following 285-residue polypeptide: Nucleotide-binding protein FMG_1084 (285 aa).

8–15 provides a ligand contact to ATP; that stretch reads GMSGAGKS. 59 to 62 is a binding site for GTP; sequence DIRG.

Belongs to the RapZ-like family.

In terms of biological role, displays ATPase and GTPase activities. The sequence is that of Nucleotide-binding protein FMG_1084 from Finegoldia magna (strain ATCC 29328 / DSM 20472 / WAL 2508) (Peptostreptococcus magnus).